The chain runs to 38 residues: MKVRASVKKLCRNCKIIRREGIVRVICSAEPRHKQRQG.

It belongs to the bacterial ribosomal protein bL36 family.

This Pseudomonas entomophila (strain L48) protein is Large ribosomal subunit protein bL36.